Reading from the N-terminus, the 66-residue chain is Large ribosomal subunit protein bL35 (66 aa).

It belongs to the bacterial ribosomal protein bL35 family.

The protein is Large ribosomal subunit protein bL35 of Brucella canis (strain ATCC 23365 / NCTC 10854 / RM-666).